Reading from the N-terminus, the 126-residue chain is Aspartate 1-decarboxylase (126 aa).

The active-site Schiff-base intermediate with substrate; via pyruvic acid is serine 25. A Pyruvic acid (Ser) modification is found at serine 25. Threonine 57 contributes to the substrate binding site. The active-site Proton donor is tyrosine 58. Substrate is bound at residue 73–75 (GAA).

The protein belongs to the PanD family. Heterooctamer of four alpha and four beta subunits. Requires pyruvate as cofactor. In terms of processing, is synthesized initially as an inactive proenzyme, which is activated by self-cleavage at a specific serine bond to produce a beta-subunit with a hydroxyl group at its C-terminus and an alpha-subunit with a pyruvoyl group at its N-terminus.

Its subcellular location is the cytoplasm. It catalyses the reaction L-aspartate + H(+) = beta-alanine + CO2. The protein operates within cofactor biosynthesis; (R)-pantothenate biosynthesis; beta-alanine from L-aspartate: step 1/1. Its function is as follows. Catalyzes the pyruvoyl-dependent decarboxylation of aspartate to produce beta-alanine. The chain is Aspartate 1-decarboxylase from Alkalilimnicola ehrlichii (strain ATCC BAA-1101 / DSM 17681 / MLHE-1).